The sequence spans 172 residues: MFINIFLFLFAATINISSSLRYAGFSSYIYTPNKYINNNVMDRKFIRRLNAVDESIKNNEHIIKLTDNAKNKIKQLVTEIEDKNLILKLCVENGGCKGLKYKLNPIKKEDIETDDYIQQFDELKFILSIDSTSVIYIYNNILDYSNDLINGGFKFINPNATKKCGCGKSFNV.

A signal peptide spans 1 to 19; that stretch reads MFINIFLFLFAATINISSS. The [4Fe-4S] cluster site is built by C96, C164, and C166.

Belongs to the HesB/IscA family. Homodimer.

It is found in the plastid. The protein localises to the apicoplast. The protein operates within cofactor biosynthesis; iron-sulfur cluster biosynthesis. Participates in the sulfur mobilization (SUF) pathway for iron-sulfur (Fe-S) cluster biogenesis. Involved in the pre-assembly of [4Fe-4S] clusters and their transfer to target proteins. The chain is Iron-sulfur cluster assembly protein SufA from Plasmodium berghei (strain Anka).